The sequence spans 21 residues: Protein YnfR (21 aa).

The sequence is that of Protein YnfR from Escherichia coli (strain K12).